The chain runs to 108 residues: MGVQVETITEGDGRTFPKKGQTVVVHYVGSLENGKKFDSSRDRNKPFKFIIGRCEVIRGWEEGVAQMSVGQRARLTCSPDFAYGATGHPGIIPPNATLTFDVELLRLE.

Residues 20 to 108 (GQTVVVHYVG…TFDVELLRLE (89 aa)) form the PPIase FKBP-type domain.

The protein belongs to the FKBP-type PPIase family. FKBP1 subfamily.

The protein resides in the cytoplasm. It catalyses the reaction [protein]-peptidylproline (omega=180) = [protein]-peptidylproline (omega=0). Inhibited by both FK506 and rapamycin. In terms of biological role, keeps in an inactive conformation TGFBR1, the TGF-beta type I serine/threonine kinase receptor, preventing TGF-beta receptor activation in absence of ligand. May modulate the RYR1 calcium channel activity. PPIases accelerate the folding of proteins. It catalyzes the cis-trans isomerization of proline imidic peptide bonds in oligopeptides. In Xenopus laevis (African clawed frog), this protein is Peptidyl-prolyl cis-trans isomerase FKBP1A (fkbp1a).